A 563-amino-acid chain; its full sequence is Calnexin homolog (563 aa).

Positions 1–23 (MRFNAAITGALVSSATLMGQAHA) are cleaved as a signal peptide. At 24–493 (EETEKKADAT…PINAVKQVPE (470 aa)) the chain is on the lumenal side. Aspartate 98 contacts Ca(2+). The cysteines at positions 141 and 175 are disulfide-linked. Residues tyrosine 145, lysine 147, tyrosine 166, and aspartate 173 each contribute to the an alpha-D-glucoside site. Residue asparagine 236 is glycosylated (N-linked (GlcNAc...) asparagine). The interval 241-323 (EDFAPPVNPE…EKPEDWDDEE (83 aa)) is disordered. A compositionally biased stretch (basic and acidic residues) spans 249 to 279 (PEKEIDDPKDKKPADWVDEAKIPDPEAKKPD). Positions 253–386 (IDDPKDKKPA…RKIPNPAYFE (134 aa)) are p domain (Extended arm). The segment covering 280 to 305 (DWDEDAPYEIVDEEATMPEDWLEDEP) has biased composition (acidic residues). Cysteine 337 and cysteine 343 form a disulfide bridge. Glutamate 402 lines the an alpha-D-glucoside pocket. Aspartate 413 provides a ligand contact to Ca(2+). The helical transmembrane segment at 494–514 (VAGGLGALLLTMILVIVGAVG) threads the bilayer. At 515–563 (ASSPAPAAAAKKGKEAASAAKEKASEAVSSAADTAKGAATKRNTRSSAQ) the chain is on the cytoplasmic side. The disordered stretch occupies residues 521–563 (AAAAKKGKEAASAAKEKASEAVSSAADTAKGAATKRNTRSSAQ). Positions 526 to 539 (KGKEAASAAKEKAS) are enriched in basic and acidic residues.

Belongs to the calreticulin family.

It is found in the endoplasmic reticulum membrane. In terms of biological role, interacts with newly synthesized monoglucosylated glycoproteins in the endoplasmic reticulum. It may act in assisting protein assembly and/or in the retention within the ER of unassembled protein subunits. It seems to play a major role in the quality control apparatus of the ER by the retention of incorrectly folded proteins. The protein is Calnexin homolog of Aspergillus fumigatus (strain ATCC MYA-4609 / CBS 101355 / FGSC A1100 / Af293) (Neosartorya fumigata).